Here is a 312-residue protein sequence, read N- to C-terminus: Porphobilinogen deaminase (312 aa).

S-(dipyrrolylmethanemethyl)cysteine is present on Cys241.

The protein belongs to the HMBS family. As to quaternary structure, monomer. The cofactor is dipyrromethane.

The enzyme catalyses 4 porphobilinogen + H2O = hydroxymethylbilane + 4 NH4(+). It participates in porphyrin-containing compound metabolism; protoporphyrin-IX biosynthesis; coproporphyrinogen-III from 5-aminolevulinate: step 2/4. Tetrapolymerization of the monopyrrole PBG into the hydroxymethylbilane pre-uroporphyrinogen in several discrete steps. The protein is Porphobilinogen deaminase of Aliarcobacter butzleri (strain RM4018) (Arcobacter butzleri).